Here is a 523-residue protein sequence, read N- to C-terminus: Glycerate kinase (523 aa).

S60 bears the Phosphoserine mark. Residue K200 is modified to N6-acetyllysine.

It belongs to the glycerate kinase type-2 family.

The protein resides in the cytoplasm. The catalysed reaction is (R)-glycerate + ATP = (2R)-3-phosphoglycerate + ADP + H(+). In Bos taurus (Bovine), this protein is Glycerate kinase (GLYCTK).